We begin with the raw amino-acid sequence, 499 residues long: Long chain base biosynthesis protein 2b (499 aa).

Residues 5 to 25 traverse the membrane as a helical segment; that stretch reads VPYVTAATTLFSFGLIFGFGH. The residue at position 322 (lysine 322) is an N6-(pyridoxal phosphate)lysine.

This sequence belongs to the class-II pyridoxal-phosphate-dependent aminotransferase family. In terms of assembly, heterodimer with LCB1. Component of the serine palmitoyltransferase (SPT) complex, composed of LCB1 and LCB2. It depends on pyridoxal 5'-phosphate as a cofactor.

Its subcellular location is the endoplasmic reticulum membrane. It catalyses the reaction L-serine + hexadecanoyl-CoA + H(+) = 3-oxosphinganine + CO2 + CoA. The protein operates within lipid metabolism; sphingolipid metabolism. Functionally, serine palmitoyltransferase (SPT). The heterodimer formed with LCB1 constitutes the catalytic core. This Oryza sativa subsp. japonica (Rice) protein is Long chain base biosynthesis protein 2b.